We begin with the raw amino-acid sequence, 1415 residues long: Bridge-like lipid transfer protein family member 3B (1415 aa).

Residues 3 to 94 (GLIKKQILKH…DKVIMEMSTC (92 aa)) form the Chorein N-terminal domain. Disordered regions lie at residues 267 to 300 (STEQ…STTP) and 882 to 904 (KSPL…SEGV). Polar residues predominate over residues 275-300 (ASETTQSPTPPVSSQQVKNPQTSTTP). Residues 1367–1404 (KAAGISKEQLVEENECLKQELAKTKMALAESHMERDRL) adopt a coiled-coil conformation.

Its subcellular location is the cytoplasm. It is found in the cytosol. It localises to the early endosome. Its function is as follows. Tube-forming lipid transport protein which mediates the transfer of lipids between membranes at organelle contact sites. Required for retrograde traffic of vesicle clusters in the early endocytic pathway to the Golgi complex. The polypeptide is Bridge-like lipid transfer protein family member 3B (bltp3b) (Xenopus laevis (African clawed frog)).